We begin with the raw amino-acid sequence, 153 residues long: 3-hydroxyacyl-[acyl-carrier-protein] dehydratase FabZ (153 aa).

Residue H52 is part of the active site.

Belongs to the thioester dehydratase family. FabZ subfamily.

It is found in the cytoplasm. It catalyses the reaction a (3R)-hydroxyacyl-[ACP] = a (2E)-enoyl-[ACP] + H2O. Involved in unsaturated fatty acids biosynthesis. Catalyzes the dehydration of short chain beta-hydroxyacyl-ACPs and long chain saturated and unsaturated beta-hydroxyacyl-ACPs. The polypeptide is 3-hydroxyacyl-[acyl-carrier-protein] dehydratase FabZ (Magnetococcus marinus (strain ATCC BAA-1437 / JCM 17883 / MC-1)).